Reading from the N-terminus, the 360-residue chain is Phospho-N-acetylmuramoyl-pentapeptide-transferase (360 aa).

The next 10 membrane-spanning stretches (helical) occupy residues 25–45 (RGIL…PWMI), 73–93 (TMGG…WADL), 97–117 (YVWV…VDDY), 134–154 (YFWQ…TAPT), 168–188 (VTIP…VGSS), 199–219 (GLAI…CYLS), 236–256 (SGEL…FLWF), 263–283 (VFMG…IAVI), 288–308 (IVLF…VIQV), and 338–358 (VIVR…ATLK).

Belongs to the glycosyltransferase 4 family. MraY subfamily. Mg(2+) is required as a cofactor.

The protein localises to the cell inner membrane. The enzyme catalyses UDP-N-acetyl-alpha-D-muramoyl-L-alanyl-gamma-D-glutamyl-meso-2,6-diaminopimeloyl-D-alanyl-D-alanine + di-trans,octa-cis-undecaprenyl phosphate = di-trans,octa-cis-undecaprenyl diphospho-N-acetyl-alpha-D-muramoyl-L-alanyl-D-glutamyl-meso-2,6-diaminopimeloyl-D-alanyl-D-alanine + UMP. The protein operates within cell wall biogenesis; peptidoglycan biosynthesis. In terms of biological role, catalyzes the initial step of the lipid cycle reactions in the biosynthesis of the cell wall peptidoglycan: transfers peptidoglycan precursor phospho-MurNAc-pentapeptide from UDP-MurNAc-pentapeptide onto the lipid carrier undecaprenyl phosphate, yielding undecaprenyl-pyrophosphoryl-MurNAc-pentapeptide, known as lipid I. The protein is Phospho-N-acetylmuramoyl-pentapeptide-transferase of Pseudomonas putida (strain ATCC 700007 / DSM 6899 / JCM 31910 / BCRC 17059 / LMG 24140 / F1).